Here is a 275-residue protein sequence, read N- to C-terminus: Large ribosomal subunit protein uL2 (275 aa).

Disordered regions lie at residues 1 to 20 (MAVK…TTAD) and 214 to 275 (WLGR…TRRK). The span at 255–275 (KGLKTRRKRKTSDRFIVTRRK) shows a compositional bias: basic residues.

The protein belongs to the universal ribosomal protein uL2 family. As to quaternary structure, part of the 50S ribosomal subunit. Forms a bridge to the 30S subunit in the 70S ribosome.

Its function is as follows. One of the primary rRNA binding proteins. Required for association of the 30S and 50S subunits to form the 70S ribosome, for tRNA binding and peptide bond formation. It has been suggested to have peptidyltransferase activity; this is somewhat controversial. Makes several contacts with the 16S rRNA in the 70S ribosome. The sequence is that of Large ribosomal subunit protein uL2 (rplB) from Deinococcus radiodurans (strain ATCC 13939 / DSM 20539 / JCM 16871 / CCUG 27074 / LMG 4051 / NBRC 15346 / NCIMB 9279 / VKM B-1422 / R1).